A 292-amino-acid chain; its full sequence is MASNRGQLNHELSKLFNELWDADQNRMKSGKDYRISLQGKAGYVPAGSNQARDSASFPLFQFVDEEKLKSRKTFATFISLLDNYEMDTGVAEVVTPEEIAENNNFLDAILETKVMKMAHDYLVRKNQAKPTRNDFKVQLYNIWFQLYSRAPGSRPDSCGFEHVFVGESKRGQEMMGLHNWVQFYLQEKRKNIDYKGYVARQNKSRPDEDDQVLNLQFNWKEMVKPVGSSFIGVSPEFEFALYTIVFLASQEKMSREVVRLEEYELQIVVNRHGRYIGTAYPVLLSTNNPDLY.

Residues 8-285 (LNHELSKLFN…IGTAYPVLLS (278 aa)) enclose the EndoU domain. Residues His162, His178, and Lys224 contribute to the active site.

The protein belongs to the ENDOU family. As to quaternary structure, monomer. The cofactor is Mn(2+).

Its subcellular location is the nucleus. It catalyses the reaction uridylyl-uridylyl-ribonucleotide-RNA = a 3'-end uridylyl-2',3'-cyclophospho-uridine-RNA + a 5'-end dephospho-ribonucleoside-RNA. Poly(U)-specific endoribonuclease involved in the processing of intron-encoded box C/D snoRNAs, such as U16 and U86. Releases products that have 2',3'-cyclic phosphate termini at the 3'-end. In Xenopus laevis (African clawed frog), this protein is Poly(U)-specific endoribonuclease-A (endou-a).